Reading from the N-terminus, the 386-residue chain is Cytoplasmic 60S subunit biogenesis factor ZNF622 (386 aa).

The residue at position 2 (alanine 2) is an N-acetylalanine. 2 consecutive U1-type zinc fingers follow at residues 4–28 (YTCITCRVAFRDAEMQRAHYKTDWH) and 67–91 (TYCTVCSKKFATFNAYENHLKSRRH). The tract at residues 135–237 (AIKAQPSTSP…AEDAEAEESP (103 aa)) is disordered. The segment covering 165 to 176 (GTPERDPTEKPP) has biased composition (basic and acidic residues). The span at 194–235 (EESEEEGEEDDEDWEDIDSDDGLECENPGVEEEDAEDAEAEE) shows a compositional bias: acidic residues. At serine 269 the chain carries Phosphoserine.

This sequence belongs to the REI1 family. In terms of assembly, homo- and heterodimer. Associates with pre-60S ribosomal particles. Interacts with MELK and MYBL2. Interacts with DNAJC21. Post-translationally, phosphorylated by MELK. The phosphorylation may redirect the protein to the nucleus. In terms of processing, ubiquitinated by HECTD1, leading to its degradation.

It is found in the cytoplasm. The protein resides in the nucleus. In terms of biological role, pre-60S-associated cytoplasmic factor involved in the cytoplasmic maturation of the 60S subunit. This Rattus norvegicus (Rat) protein is Cytoplasmic 60S subunit biogenesis factor ZNF622 (Znf622).